A 148-amino-acid polypeptide reads, in one-letter code: UPF0756 membrane protein YeaL (148 aa).

Helical transmembrane passes span 14 to 34 (ALGFISHNTTVAVSILVLIIV), 51 to 71 (LSIGIIILTIGVMAPIASGTL), 86 to 106 (LVAIAVGVIVYWLGGRGVTLM), and 121 to 141 (VLGVALFRGVPVGPLIAAGLV).

Belongs to the UPF0756 family.

It is found in the cell membrane. The chain is UPF0756 membrane protein YeaL from Shigella dysenteriae serotype 1 (strain Sd197).